Here is a 129-residue protein sequence, read N- to C-terminus: Small ribosomal subunit protein uS11 (129 aa).

This sequence belongs to the universal ribosomal protein uS11 family. As to quaternary structure, part of the 30S ribosomal subunit. Interacts with proteins S7 and S18. Binds to IF-3.

Functionally, located on the platform of the 30S subunit, it bridges several disparate RNA helices of the 16S rRNA. Forms part of the Shine-Dalgarno cleft in the 70S ribosome. The chain is Small ribosomal subunit protein uS11 from Haemophilus ducreyi (strain 35000HP / ATCC 700724).